Consider the following 500-residue polypeptide: Carnosic acid synthase (500 aa).

The chain crosses the membrane as a helical span at residues 4 to 24 (LILLSLAFLASCVVAYSRRRP). Heme is bound at residue cysteine 443.

Belongs to the cytochrome P450 family. Heme serves as cofactor. In terms of tissue distribution, mostly expressed in young leaves, particularly in glandular trichomes.

The protein localises to the membrane. It carries out the reaction 11-hydroxyferruginol + 3 reduced [NADPH--hemoprotein reductase] + 3 O2 = carnosate + 3 oxidized [NADPH--hemoprotein reductase] + 4 H2O + 4 H(+). The enzyme catalyses miltiradiene + 2 reduced [NADPH--hemoprotein reductase] + 2 O2 = miltiradien-20-al + 2 oxidized [NADPH--hemoprotein reductase] + 3 H2O + 2 H(+). It catalyses the reaction ferruginol + 3 reduced [NADPH--hemoprotein reductase] + 3 O2 = pisiferate + 3 oxidized [NADPH--hemoprotein reductase] + 4 H2O + 4 H(+). It participates in secondary metabolite biosynthesis; terpenoid biosynthesis. Its function is as follows. Monooxygenase involved in the biosynthesis of carnosate, a potent antioxidant labdane-related diterpene natural product. Catalyzes the oxidation of 11-hydroxyferruginol to produce carnosate. Mediates the conversion of miltiradien into miltiradien-20-al. Also involved in the production of pisiferic acid and derivative products from ferruginol. This chain is Carnosic acid synthase, found in Salvia fruticosa (Greek sage).